The chain runs to 518 residues: Bifunctional purine biosynthesis protein PurH (518 aa).

The MGS-like domain maps to 1-146; sequence MSPIALLSVS…KNHQDVLVVT (146 aa).

Belongs to the PurH family.

It carries out the reaction (6R)-10-formyltetrahydrofolate + 5-amino-1-(5-phospho-beta-D-ribosyl)imidazole-4-carboxamide = 5-formamido-1-(5-phospho-D-ribosyl)imidazole-4-carboxamide + (6S)-5,6,7,8-tetrahydrofolate. It catalyses the reaction IMP + H2O = 5-formamido-1-(5-phospho-D-ribosyl)imidazole-4-carboxamide. It functions in the pathway purine metabolism; IMP biosynthesis via de novo pathway; 5-formamido-1-(5-phospho-D-ribosyl)imidazole-4-carboxamide from 5-amino-1-(5-phospho-D-ribosyl)imidazole-4-carboxamide (10-formyl THF route): step 1/1. It participates in purine metabolism; IMP biosynthesis via de novo pathway; IMP from 5-formamido-1-(5-phospho-D-ribosyl)imidazole-4-carboxamide: step 1/1. The sequence is that of Bifunctional purine biosynthesis protein PurH from Prochlorococcus marinus (strain NATL2A).